The chain runs to 236 residues: Small ribosomal subunit protein uS2c (236 aa).

Belongs to the universal ribosomal protein uS2 family.

It localises to the plastid. The protein localises to the chloroplast. The sequence is that of Small ribosomal subunit protein uS2c (rps2) from Lepidium virginicum (Virginia pepperweed).